We begin with the raw amino-acid sequence, 231 residues long: 7-cyano-7-deazaguanine synthase (231 aa).

ATP is bound at residue 11 to 21 (LSAGLDSTVNA). Positions 197, 205, 208, and 211 each coordinate Zn(2+).

Belongs to the QueC family. Requires Zn(2+) as cofactor.

The enzyme catalyses 7-carboxy-7-deazaguanine + NH4(+) + ATP = 7-cyano-7-deazaguanine + ADP + phosphate + H2O + H(+). The protein operates within purine metabolism; 7-cyano-7-deazaguanine biosynthesis. Functionally, catalyzes the ATP-dependent conversion of 7-carboxy-7-deazaguanine (CDG) to 7-cyano-7-deazaguanine (preQ(0)). This chain is 7-cyano-7-deazaguanine synthase, found in Bdellovibrio bacteriovorus (strain ATCC 15356 / DSM 50701 / NCIMB 9529 / HD100).